Reading from the N-terminus, the 453-residue chain is Protein FAM117A (453 aa).

The segment covering 1–25 (MAGAAAGGRGGGAWGPGRGGAGGLR) has biased composition (gly residues). The segment at 1–45 (MAGAAAGGRGGGAWGPGRGGAGGLRRGCSPPAPAGSPRAGLQPLR) is disordered. 2 positions are modified to phosphoserine: serine 29 and serine 67. Positions 149 to 175 (TDHRKEISKLKQQLQRTKLSRSGKEKE) form a coiled coil. The disordered stretch occupies residues 159 to 201 (KQQLQRTKLSRSGKEKERGSPLLGDHAVRGALRASPPSFPSGS). A phosphoserine mark is found at serine 178, serine 193, serine 201, and serine 213. The span at 269 to 278 (SSPSMSLASP) shows a compositional bias: low complexity. A disordered region spans residues 269–320 (SSPSMSLASPQPCGLASHEEHRGAAEELASTPNDKASSPGHPAFLEDGSPSP). A Phosphothreonine modification is found at threonine 299. Residues serine 319 and serine 327 each carry the phosphoserine modification. Position 354 is a phosphothreonine (threonine 354). Over residues 406–416 (GSPLPPASPRP) the composition is skewed to pro residues. The segment at 406 to 453 (GSPLPPASPRPPPRKDPEASKASPLPFEPWQRTPPSEEPVLFQSSLMV) is disordered. A phosphoserine mark is found at serine 413 and serine 428.

This sequence belongs to the FAM117 family.

The polypeptide is Protein FAM117A (FAM117A) (Homo sapiens (Human)).